Consider the following 370-residue polypeptide: Adaptive-response sensory kinase SasA (370 aa).

One can recognise a Histidine kinase domain in the interval Met152 to Gln365. The residue at position 155 (His155) is a Phosphohistidine; by autocatalysis.

In terms of assembly, homooligomerizes. Interacts with KaiC. Participates in the KaiBC complex, whose core is composed of a KaiC homohexamer and 6 KaiB.

It catalyses the reaction ATP + protein L-histidine = ADP + protein N-phospho-L-histidine.. In terms of biological role, member of the two-component regulatory system SasA/RpaA involved in genome-wide circadian gene expression. One of several clock output pathways. Participates in the Kai clock protein complex, the main circadian regulator in cyanobacteria, via its interaction with KaiC. KaiC enhances the autophosphorylation activity of SasA, which then transfers its phosphate group to RpaA to activate it. In addition to its output function, recruits fold-shifted KaiB (KaiB(fs)) to KaiC to cooperatively form the KaiB(6):KaiC(6) complex (independent of SasA kinase activity). Required for robustness of the circadian rhythm of gene expression and is involved in clock output, also required for adaptation to light/dark cycles. The chain is Adaptive-response sensory kinase SasA from Prochlorococcus marinus (strain MIT 9313).